A 579-amino-acid chain; its full sequence is Thiol:disulfide interchange protein DsbD (579 aa).

The N-terminal stretch at 1 to 16 is a signal peptide; the sequence is MKKLFLFFTLIFTAFA. Disulfide bonds link Cys-124–Cys-129 and Cys-193–Cys-315. A run of 8 helical transmembrane segments spans residues 178–198, 230–250, 254–274, 296–316, 337–357, 376–396, 397–417, and 420–440; these read IFGFFLLGLGLAFTPCVLPML, LTYTLLGLAVAAIGLPFQIAL, YVMIGLSILFVALALSMFGLF, GAFGGAFAMGMIAGLVASPCT, AATLYLLALGMGVPLMLITLF, FGFVMLALPVFLLSRILPEVW, EPRLWAGLATVFFIWFALQMS, and GFGYAIKIISFALAMVTVQPL. One can recognise a Thioredoxin domain in the interval 449–579; sequence TTTQSAVENM…AFSNWLKALH (131 aa). A disulfide bridge connects residues Cys-495 and Cys-498.

This sequence belongs to the thioredoxin family. DsbD subfamily.

Its subcellular location is the cell inner membrane. It carries out the reaction [protein]-dithiol + NAD(+) = [protein]-disulfide + NADH + H(+). It catalyses the reaction [protein]-dithiol + NADP(+) = [protein]-disulfide + NADPH + H(+). Its function is as follows. Required to facilitate the formation of correct disulfide bonds in some periplasmic proteins and for the assembly of the periplasmic c-type cytochromes. Acts by transferring electrons from cytoplasmic thioredoxin to the periplasm. This transfer involves a cascade of disulfide bond formation and reduction steps. The protein is Thiol:disulfide interchange protein DsbD of Haemophilus influenzae (strain 86-028NP).